We begin with the raw amino-acid sequence, 270 residues long: Nodule lectin (270 aa).

The signal sequence occupies residues 1–33; it reads MAFYRTNLPTRELFSLVSVVIVLLATNINSVQA. Residues 34–41 constitute a propeptide that is removed on maturation; it reads LSFNFTKL. Asparagine 134 carries N-linked (GlcNAc...) asparagine glycosylation.

This sequence belongs to the leguminous lectin family. Post-translationally, glycosylated in a boron-dependent manner. Glycosylation is required for localization to symbiosomes. 3 different glycosylation variants, NLEC-1A, NLEC-1B and NLEC-1C, have been identified. In terms of tissue distribution, expressed in nodules of Rhizobium-infected and uninfected roots and in the root stele near the nodule attachment point. In roots which have been colonized by the endomycorrhizal fungus G.versiforme, detected only in cortical cells colonized by the fungus, mainly those containing arbuscules.

Its subcellular location is the symbiosome. It localises to the peribacteroid space. The protein localises to the peribacteroid membrane. Its function is as follows. Involved in symbiosome development. This Pisum sativum (Garden pea) protein is Nodule lectin (NLEC1).